Here is a 451-residue protein sequence, read N- to C-terminus: Phosphoglucosamine mutase (451 aa).

S101 acts as the Phosphoserine intermediate in catalysis. Mg(2+)-binding residues include S101, D240, D242, and D244. A Phosphoserine modification is found at S101.

It belongs to the phosphohexose mutase family. Mg(2+) serves as cofactor. Activated by phosphorylation.

The catalysed reaction is alpha-D-glucosamine 1-phosphate = D-glucosamine 6-phosphate. In terms of biological role, catalyzes the conversion of glucosamine-6-phosphate to glucosamine-1-phosphate. The chain is Phosphoglucosamine mutase from Streptococcus pyogenes serotype M18 (strain MGAS8232).